The chain runs to 476 residues: E3 SUMO-protein ligase EGR2 (476 aa).

The span at 127 to 141 (PASTTASSSVTSASP) shows a compositional bias: low complexity. The disordered stretch occupies residues 127–178 (PASTTASSSVTSASPNPLATGPLGVCTMSQTQPDLDHLYSPPPPPPPYSGCA). The HCFC1-binding-motif (HBM) signature appears at 162–165 (DHLY). N6-acetyllysine; by EP300 is present on lysine 247. Disordered stretches follow at residues 275-300 (GPSA…SSSA) and 318-341 (RPIL…RPYP). Over residues 281-290 (TGPGASGGSE) the composition is skewed to gly residues. 3 consecutive C2H2-type zinc fingers follow at residues 340 to 364 (YPCP…IRIH), 370 to 392 (FQCR…IRTH), and 398 to 420 (FACD…TKIH). Residues 412-476 (ERKRHTKIHL…APCSSRTRTP (65 aa)) form a disordered region. Over residues 415–425 (RHTKIHLRQKE) the composition is skewed to basic residues. Residues 429–476 (SAPSASVPAPSTASCSGGVQPGGTLCSSNSSSLGGGPLAPCSSRTRTP) are compositionally biased toward low complexity.

This sequence belongs to the EGR C2H2-type zinc-finger protein family. In terms of assembly, interacts with HCFC1. Interacts with WWP2. Interacts with UBC9. Interacts with CITED1. Interacts (via phosphorylated form) with SFN. In terms of processing, ubiquitinated by WWP2 leading to proteasomal degradation. Post-translationally, acetylated at Lys-247. May be deacetylated by HDAC6, HDAC10 or SIRT1.

It localises to the nucleus. The protein operates within protein modification; protein sumoylation. Its function is as follows. Sequence-specific DNA-binding transcription factor. Plays a role in hindbrain segmentation by regulating the expression of a subset of homeobox containing genes and in Schwann cell myelination by regulating the expression of genes involved in the formation and maintenance of myelin. Binds to two EGR2-consensus sites EGR2A (5'-CTGTAGGAG-3') and EGR2B (5'-ATGTAGGTG-3') in the HOXB3 enhancer and promotes HOXB3 transcriptional activation. Binds to specific DNA sites located in the promoter region of HOXA4, HOXB2 and ERBB2. Regulates hindbrain segmentation by controlling the expression of Hox genes, such as HOXA4, HOXB3 and HOXB2, and thereby specifying odd and even rhombomeres. Promotes the expression of HOXB3 in the rhombomere r5 in the hindbrain. Regulates myelination in the peripheral nervous system after birth, possibly by regulating the expression of myelin proteins, such as MPZ, and by promoting the differentiation of Schwann cells. Involved in the development of the jaw openener musculature, probably by playing a role in its innervation through trigeminal motor neurons. May play a role in adipogenesis, possibly by regulating the expression of CEBPB. In terms of biological role, E3 SUMO-protein ligase helping SUMO1 conjugation to its coregulators NAB1 and NAB2, whose sumoylation down-regulates EGR2 transcriptional activity. This chain is E3 SUMO-protein ligase EGR2 (EGR2), found in Homo sapiens (Human).